A 121-amino-acid polypeptide reads, in one-letter code: ORF8 protein (121 aa).

The signal sequence occupies residues 1–15 (MKFLVFLGIITTVAA). One can recognise an SARS ORF8 Ig-like domain in the interval 19-121 (ECSLQSCTQH…HDVRVVLDFI (103 aa)). Disulfide bonds link cysteine 25–cysteine 90, cysteine 37–cysteine 102, and cysteine 61–cysteine 83. The N-linked (GlcNAc...) (complex) asparagine; by host glycan is linked to asparagine 78.

In terms of assembly, homodimer. Interacts with host IL17RA. Interacts with host IL17RC. Interacts with host MHC-I. Glycosylated by the host when secreted via the conventional pathway. The glycosylated form cannot bind IL17A and would not participate in the cytokine storm.

It localises to the secreted. Functionally, plays a role in modulating the host immune response. May act as a secreted virokine by mimicking interleukin-17A (IL17A), and thereby binding to the IL17RA receptor, leading to activation of the IL17 pathway and increased secretion of pro-inflammatory factors. Contributes to the cytokine storm during SARS-CoV-2 infection when secreted by unconventional pathway. May act by down-regulating major histocompability complex class I (MHC-I) at cell surface. May inhibit expression of some members of the IFN-stimulated gene (ISG) family including hosts IGF2BP1/ZBP1, MX1 and MX2, and DHX58. The protein is ORF8 protein of Severe acute respiratory syndrome coronavirus 2 (2019-nCoV).